Consider the following 271-residue polypeptide: MEFWQHIYSNFNVIAFSIFGLKVHWYGIMYVIALLLALLLAKFFVKKFQLDINEKHLDSYFIWVEIGVILGARLGYILIYDANTMYYITHPWQIFNPYINGEFVGIRGMSYHGAIIGFLIATLLFCKKYKTNPWIFLDLVALSVPLAYVFGRIGNFLNQELFGRITNVPWGIYVDGILRHPSQLYEAFLEGIVVFIIVYLARFKQSFQGELILVYAGAYSLARFICEFYREPDFGIGFVLWGMSMGQILSFIMFITALLVYICIKFKKVNI.

7 helical membrane-spanning segments follow: residues 25–45 (WYGIMYVIALLLALLLAKFFV), 60–80 (YFIWVEIGVILGARLGYILIY), 103–123 (FVGIRGMSYHGAIIGFLIATL), 134–154 (WIFLDLVALSVPLAYVFGRIG), 181–201 (PSQLYEAFLEGIVVFIIVYLA), 209–229 (GELILVYAGAYSLARFICEFY), and 235–255 (GIGFVLWGMSMGQILSFIMFI). Arginine 152 is a binding site for a 1,2-diacyl-sn-glycero-3-phospho-(1'-sn-glycerol).

The protein belongs to the Lgt family.

It localises to the cell inner membrane. It carries out the reaction L-cysteinyl-[prolipoprotein] + a 1,2-diacyl-sn-glycero-3-phospho-(1'-sn-glycerol) = an S-1,2-diacyl-sn-glyceryl-L-cysteinyl-[prolipoprotein] + sn-glycerol 1-phosphate + H(+). Its pathway is protein modification; lipoprotein biosynthesis (diacylglyceryl transfer). Its function is as follows. Catalyzes the transfer of the diacylglyceryl group from phosphatidylglycerol to the sulfhydryl group of the N-terminal cysteine of a prolipoprotein, the first step in the formation of mature lipoproteins. This chain is Phosphatidylglycerol--prolipoprotein diacylglyceryl transferase, found in Campylobacter jejuni subsp. jejuni serotype O:23/36 (strain 81-176).